A 489-amino-acid polypeptide reads, in one-letter code: MSRRNYKVLYVSGEVSPFVRTSALADFMASFPQALEEEGFEARIMMPKYGTINDRKFRLHDVLRLSDIEVPLREKTDMLNVKVTALPSSKIQTYFLYNEKYFKRNGLFTDVYLGNDLKGNTEKVIFFNVGVLETLVRLGWKPDIIHCHDWYASLIPLLLKTVYRDHEFFKGIKTVLTIHNAYRQGVLPFKVFEKLLPEEVSGALHRSAENVNMLYTGVENADMLTTTSKLHADEILHDEIPGCGLQQILAGQNGILHGIVNGIDTRQWNPSTDKLIKKRFATDRMDGKLDNRAALSEEVHMPFEDGRPVVGVIMHFDDFQGAVLIEKSLKKLVALDIHLLICGAGDKKYEKSFRDFADAHPDRVSLSTDCPESFLHLAIAGLDMLVMAGKIESCGMLQMFAMSYGTIPVAYAGGGIVETIDEVSEGGGSGFIFREYTPDALVSKLHEAIGLYHDSERWQELVMRAMTRDFAWKGAAEEYAGLYRELLGN.

An ADP-alpha-D-glucose-binding site is contributed by arginine 20.

It belongs to the glycosyltransferase 1 family. Bacterial/plant glycogen synthase subfamily.

The enzyme catalyses [(1-&gt;4)-alpha-D-glucosyl](n) + ADP-alpha-D-glucose = [(1-&gt;4)-alpha-D-glucosyl](n+1) + ADP + H(+). It participates in glycan biosynthesis; glycogen biosynthesis. Synthesizes alpha-1,4-glucan chains using ADP-glucose. In Chlorobium luteolum (strain DSM 273 / BCRC 81028 / 2530) (Pelodictyon luteolum), this protein is Glycogen synthase.